The chain runs to 419 residues: MNRHLWKSQLCEMVQPSGGPAADQDVLGEESPLGKPAMLHLPSEQGAPETLQRCLEENQELRDAIRQSNQILRERCEELLHFQASQREEKEFLMCKFQEARKLVERLGLEKLDLKRQKEQALREVEHLKRCQQQMAEDKASVKAQVTSLLGELQESQSRLEAATKECQALEGRARAASEQARQLESEREALQQQHSVQVDQLRMQGQSVEAALRMERQAASEEKRKLAQLQVAYHQLFQEYDNHIKSSVVGSERKRGMQLEDLKQQLQQAEEALVAKQEVIDKLKEEAEQHKIVMETVPVLKAQADIYKADFQAERQAREKLAEKKELLQEQLEQLQREYSKLKASCQESARIEDMRKRHVEVSQAPLPPAPAYLSSPLALPSQRRSPPEEPPDFCCPKCQYQAPDMDTLQIHVMECIE.

The tract at residues 1–197 (MNRHLWKSQL…REALQQQHSV (197 aa)) is required for interaction with and ubiquitination by MARCHF2. S31 and S43 each carry phosphoserine; by IKKB. The tract at residues 44 to 111 (EQGAPETLQR…KLVERLGLEK (68 aa)) is interaction with CHUK/IKBKB. Positions 49 to 356 (ETLQRCLEEN…CQESARIEDM (308 aa)) form a coiled coil. A Phosphoserine modification is found at S68. A Phosphoserine; by ATM modification is found at S85. Residues K111, K139, K143, K226, K246, and K264 each participate in a glycyl lysine isopeptide (Lys-Gly) (interchain with G-Cter in ubiquitin) cross-link. The interval 150–257 (LGELQESQSR…SVVGSERKRG (108 aa)) is interaction with TANK. The ubiquitin-binding (UBAN) stretch occupies residues 242 to 350 (DNHIKSSVVG…SKLKASCQES (109 aa)). Residues 246 to 365 (KSSVVGSERK…MRKRHVEVSQ (120 aa)) are self-association. The segment at 251 to 419 (GSERKRGMQL…LQIHVMECIE (169 aa)) is required for interaction with TNFAIP3. K277 participates in a covalent cross-link: Glycyl lysine isopeptide (Lys-Gly) (interchain with G-Cter in SUMO); alternate. K277 participates in a covalent cross-link: Glycyl lysine isopeptide (Lys-Gly) (interchain with G-Cter in ubiquitin); alternate. Glycyl lysine isopeptide (Lys-Gly) (interchain with G-Cter in ubiquitin) cross-links involve residues K283, K285, K292, and K302. K309 participates in a covalent cross-link: Glycyl lysine isopeptide (Lys-Gly) (interchain with G-Cter in SUMO); alternate. K309 is covalently cross-linked (Glycyl lysine isopeptide (Lys-Gly) (interchain with G-Cter in ubiquitin); alternate). Residues K321 and K325 each participate in a glycyl lysine isopeptide (Lys-Gly) (interchain with G-Cter in ubiquitin) cross-link. The segment at 322-343 (LAEKKELLQEQLEQLQREYSKL) is leucine-zipper. Residue K326 forms a Glycyl lysine isopeptide (Lys-Gly) (interchain with G-Cter in ubiquitin and interchain with MARCHF2) linkage. A disordered region spans residues 358–395 (KRHVEVSQAPLPPAPAYLSSPLALPSQRRSPPEEPPDF). The span at 373 to 386 (AYLSSPLALPSQRR) shows a compositional bias: low complexity. S376 bears the Phosphoserine; by IKKB mark. Positions 382 to 419 (PSQRRSPPEEPPDFCCPKCQYQAPDMDTLQIHVMECIE) are interaction with CYLD. S387 carries the phosphoserine modification. A CCHC NOA-type zinc finger spans residues 389 to 419 (PEEPPDFCCPKCQYQAPDMDTLQIHVMECIE). C397 is a Zn(2+) binding site. Residue K399 forms a Glycyl lysine isopeptide (Lys-Gly) (interchain with G-Cter in ubiquitin) linkage. Residues C400, H413, and C417 each contribute to the Zn(2+) site.

Homodimer; disulfide-linked. Component of the I-kappa-B-kinase (IKK) core complex consisting of CHUK, IKBKB and IKBKG; probably four alpha/CHUK-beta/IKBKB dimers are associated with four gamma/IKBKG subunits. The IKK core complex seems to associate with regulatory or adapter proteins to form a IKK-signalosome holo-complex. The IKK complex associates with TERF2IP/RAP1, leading to promote IKK-mediated phosphorylation of RELA/p65. Part of a complex composed of NCOA2, NCOA3, CHUK/IKKA, IKBKB, IKBKG and CREBBP. Interacts with COPS3, CYLD, NALP2, TRPC4AP and PIDD1. Interacts with ATM; the complex is exported from the nucleus. Interacts with TRAF6. Interacts with IKBKE. Interacts with TANK; the interaction is enhanced by IKBKE and TBK1. Part of a ternary complex consisting of TANK, IKBKB and IKBKG. Interacts with ZFAND5. Interacts with RIPK2. Interacts with TNIP1 and TNFAIP3; TNIP1 facilitates the TNFAIP3-mediated de-ubiquitination of IKBKG. Interacts with TNFAIP3; the interaction is induced by TNF stimulation and by polyubiquitin. Binds (via UBAN region) polyubiquitin; binds both 'Lys-63'-linked and linear polyubiquitin, with higher affinity for linear ubiquitin. Interacts with NLRP10. Interacts with TANK; this interaction increases in response to DNA damage. Interacts with USP10; this interaction increases in response to DNA damage. Interacts with ZC3H12A; this interaction increases in response to DNA damage. Interacts with IFIT5; the interaction synergizes the recruitment of IKK to MAP3K7 and enhances IKK phosphorylation. Interacts with TRIM29; this interaction induces IKBKG/NEMO ubiquitination and proteolytic degradation. Interacts with TRIM13; this interaction leads to IKBKG/NEMO ubiquitination. Interacts with ARFIP2. Interacts with RIPK1. Interacts with (ubiquitinated) BCL10; interaction with polyubiquitinated BCL10 via both 'Lys-63'-linked and linear ubiquitin is required for TCR-induced NF-kappa-B activation. Interacts with MARCHF2; during the late stages of macrophage viral and bacterial infection; the interaction leads to ubiquitination and degradation of IKBKG/NEMO. In terms of assembly, (Microbial infection) Interacts with Molluscum contagiosum virus protein MC005; this interaction inhibits NF-kappa-B activation. As to quaternary structure, (Microbial infection) Interacts with HTLV-1 Tax oncoprotein; the interaction activates IKBKG. (Microbial infection) Interacts with Shigella flexneri ipah9.8; the interaction promotes TNIP1-dependent 'Lys-27'-linked polyubiquitination of IKBKG which perturbs NF-kappa-B activation during bacterial infection. In terms of assembly, (Microbial infection) Interacts with SARS coronavirus-2/SARS-CoV-2 virus protein ORF9B (via N-terminus); the interaction inhibits polyubiquitination through 'Lys-63' and NF-kappa-B activation. Post-translationally, phosphorylation at Ser-68 attenuates aminoterminal homodimerization. Polyubiquitinated on Lys-285 via 'Lys-63'-linked ubiquitin; the ubiquitination is mediated downstream of NOD2 and RIPK2 and probably plays a role in signaling by facilitating interactions with ubiquitin domain-containing proteins and activates the NF-kappa-B pathway. Polyubiquitinated on Lys-285 and Lys-399 through 'Lys-63'-linked ubiquitin; the ubiquitination is mediated by BCL10, MALT1 and TRAF6 and probably plays a role in signaling by facilitating interactions with ubiquitin domain-containing proteins and activates the NF-kappa-B pathway. Monoubiquitinated on Lys-277 and Lys-309; promotes nuclear export. Polyubiquitinated through 'Lys-27' by TRIM23; involved in antiviral innate and inflammatory responses. Linear polyubiquitinated on Lys-111, Lys-143, Lys-226, Lys-246, Lys-264, Lys-277, Lys-285, Lys-292, Lys-302, Lys-309 and Lys-326; the head-to-tail polyubiquitination is mediated by the LUBAC complex and plays a key role in NF-kappa-B activation. Deubiquitinated by USP10 in a TANK-dependent and -independent manner, leading to the negative regulation of NF-kappa-B signaling upon DNA damage. Ubiquitinated at Lys-326 by MARCHF2 following bacterial and viral infection which leads to its degradation. Polyubiquitinated via 'Lys-29'-linked ubiquitin; leading to lysosomal degradation. In terms of processing, sumoylated on Lys-277 and Lys-309 with SUMO1; the modification results in phosphorylation of Ser-85 by ATM leading to a replacement of the sumoylation by mono-ubiquitination on these residues. Post-translationally, neddylated by TRIM40, resulting in stabilization of NFKBIA and down-regulation of NF-kappa-B activity. (Microbial infection) Cleaved by hepatitis A virus (HAV) protease 3C allowing the virus to disrupt the host innate immune signaling. In terms of processing, (Microbial infection) Deubiquitinated by Epstein-Barr virus BPLF1 on both 'Lys-48' and 'Lys-63'-linked ubiquitin chains; leading to NF-kappa-B signaling inhibition. Post-translationally, (Microbial infection) Polyubiquitinated on Lys-309 and Lys-321 via 'Lys-27'-linked ubiquitin by Shigella flexneri E3 ubiquitin-protein ligase ipah9.8, leading to its degradation by the proteasome. (Microbial infection) Polyubiquitination through 'Lys-63' is interrupted by interaction with SARS coronavirus-2/SARS-CoV-2 virus protein ORF9B which inhibits the NF-kappa-B pathway. As to expression, heart, brain, placenta, lung, liver, skeletal muscle, kidney and pancreas.

The protein resides in the cytoplasm. It is found in the nucleus. Its function is as follows. Regulatory subunit of the IKK core complex which phosphorylates inhibitors of NF-kappa-B thus leading to the dissociation of the inhibitor/NF-kappa-B complex and ultimately the degradation of the inhibitor. Its binding to scaffolding polyubiquitin plays a key role in IKK activation by multiple signaling receptor pathways. Can recognize and bind both 'Lys-63'-linked and linear polyubiquitin upon cell stimulation, with a much higher affinity for linear polyubiquitin. Could be implicated in NF-kappa-B-mediated protection from cytokine toxicity. Essential for viral activation of IRF3. Involved in TLR3- and IFIH1-mediated antiviral innate response; this function requires 'Lys-27'-linked polyubiquitination. Functionally, (Microbial infection) Also considered to be a mediator for HTLV-1 Tax oncoprotein activation of NF-kappa-B. The protein is NF-kappa-B essential modulator of Homo sapiens (Human).